Consider the following 430-residue polypeptide: Adenylosuccinate synthetase (430 aa).

GTP-binding positions include 13 to 19 and 41 to 43; these read GDEGKGK and GHT. Residue Asp-14 is the Proton acceptor of the active site. Mg(2+) is bound by residues Asp-14 and Gly-41. IMP-binding positions include 14-17, 39-42, Thr-130, Arg-144, Gln-225, Thr-240, and Arg-304; these read DEGK and NAGH. His-42 acts as the Proton donor in catalysis. A substrate-binding site is contributed by 300-306; sequence ATTGRAR. GTP-binding positions include Arg-306, 332-334, and 414-416; these read KLD and STG.

The protein belongs to the adenylosuccinate synthetase family. As to quaternary structure, homodimer. Mg(2+) is required as a cofactor.

It is found in the cytoplasm. It carries out the reaction IMP + L-aspartate + GTP = N(6)-(1,2-dicarboxyethyl)-AMP + GDP + phosphate + 2 H(+). The protein operates within purine metabolism; AMP biosynthesis via de novo pathway; AMP from IMP: step 1/2. In terms of biological role, plays an important role in the de novo pathway of purine nucleotide biosynthesis. Catalyzes the first committed step in the biosynthesis of AMP from IMP. This is Adenylosuccinate synthetase from Pseudomonas syringae pv. syringae (strain B728a).